Here is a 212-residue protein sequence, read N- to C-terminus: Thymidylate kinase (212 aa).

11–18 is an ATP binding site; the sequence is GPEGAGKT.

The protein belongs to the thymidylate kinase family.

It catalyses the reaction dTMP + ATP = dTDP + ADP. In terms of biological role, phosphorylation of dTMP to form dTDP in both de novo and salvage pathways of dTTP synthesis. The chain is Thymidylate kinase from Streptococcus pneumoniae (strain P1031).